Here is a 256-residue protein sequence, read N- to C-terminus: Adenylate kinase (256 aa).

49–54 (GAGKGT) is a binding site for ATP. An NMP region spans residues 69–98 (ATGDMLREQVQQKTPLGIEAKKIMDAGGLV). AMP is bound by residues Thr70, Arg75, 96–98 (GLV), 125–128 (GFPR), and Gln132. Residues 166 to 203 (GRLVHPASGRSYHKEFNPPKKRNVDDVTGEPLIQRSDD) are LID. ATP is bound by residues Arg167 and 176 to 177 (SY). AMP contacts are provided by Arg200 and Arg211. Gln239 lines the ATP pocket.

It belongs to the adenylate kinase family. AK2 subfamily. Monomer.

It is found in the cytoplasm. The protein localises to the cytosol. Its subcellular location is the mitochondrion intermembrane space. The catalysed reaction is AMP + ATP = 2 ADP. Functionally, catalyzes the reversible transfer of the terminal phosphate group between ATP and AMP. Plays an important role in cellular energy homeostasis and in adenine nucleotide metabolism. Adenylate kinase activity is critical for regulation of the phosphate utilization and the AMP de novo biosynthesis pathways. This chain is Adenylate kinase, found in Laccaria bicolor (strain S238N-H82 / ATCC MYA-4686) (Bicoloured deceiver).